We begin with the raw amino-acid sequence, 223 residues long: Urease accessory protein UreF (223 aa).

It belongs to the UreF family. UreD, UreF and UreG form a complex that acts as a GTP-hydrolysis-dependent molecular chaperone, activating the urease apoprotein by helping to assemble the nickel containing metallocenter of UreC. The UreE protein probably delivers the nickel.

It localises to the cytoplasm. In terms of biological role, required for maturation of urease via the functional incorporation of the urease nickel metallocenter. The chain is Urease accessory protein UreF from Rhizobium etli (strain ATCC 51251 / DSM 11541 / JCM 21823 / NBRC 15573 / CFN 42).